Consider the following 308-residue polypeptide: Ribosomal RNA small subunit methyltransferase H (308 aa).

S-adenosyl-L-methionine is bound by residues G36 to H38, D55, F86, D103, and Q110.

The protein belongs to the methyltransferase superfamily. RsmH family.

Its subcellular location is the cytoplasm. The catalysed reaction is cytidine(1402) in 16S rRNA + S-adenosyl-L-methionine = N(4)-methylcytidine(1402) in 16S rRNA + S-adenosyl-L-homocysteine + H(+). In terms of biological role, specifically methylates the N4 position of cytidine in position 1402 (C1402) of 16S rRNA. The chain is Ribosomal RNA small subunit methyltransferase H from Helicobacter pylori (strain G27).